Here is a 625-residue protein sequence, read N- to C-terminus: Probable potassium transport system protein Kup (625 aa).

12 helical membrane-spanning segments follow: residues 13 to 33, 53 to 73, 103 to 123, 141 to 161, 172 to 192, 206 to 226, 250 to 270, 282 to 302, 340 to 360, 369 to 389, 400 to 420, and 422 to 442; these read TALAALGVVFGDIGTSPLYAL, ILSIIFWCLMLIISIKYVAIV, IYMIAIGFIGASLFFGDGIIT, VFDPFIMPIAIAIIVTLFLVQ, FGPITLVWFLSLGILGIHSVI, AIQFIYHHPIMTFFVMGAVVL, WFFVVLPCLVLNYAGQGALLL, LLVPQWALYPMIIMATMATVI, IYVPFLNWLLLIAIIILILIF, AYGLAVTLTMLCDTILVAVFI, VLLLIIPFFILESVLVGATSL, and ILSGGWVPLLIGAIAVTILMT.

Belongs to the HAK/KUP transporter (TC 2.A.72) family.

Its subcellular location is the cell inner membrane. The enzyme catalyses K(+)(in) + H(+)(in) = K(+)(out) + H(+)(out). Transport of potassium into the cell. Likely operates as a K(+):H(+) symporter. The polypeptide is Probable potassium transport system protein Kup (Acinetobacter baumannii (strain AYE)).